The sequence spans 275 residues: Putative pyruvate, phosphate dikinase regulatory protein (275 aa).

ADP is bound at residue 151 to 158 (GVSRTSKT).

This sequence belongs to the pyruvate, phosphate/water dikinase regulatory protein family. PDRP subfamily.

The catalysed reaction is N(tele)-phospho-L-histidyl/L-threonyl-[pyruvate, phosphate dikinase] + ADP = N(tele)-phospho-L-histidyl/O-phospho-L-threonyl-[pyruvate, phosphate dikinase] + AMP + H(+). It catalyses the reaction N(tele)-phospho-L-histidyl/O-phospho-L-threonyl-[pyruvate, phosphate dikinase] + phosphate + H(+) = N(tele)-phospho-L-histidyl/L-threonyl-[pyruvate, phosphate dikinase] + diphosphate. Functionally, bifunctional serine/threonine kinase and phosphorylase involved in the regulation of the pyruvate, phosphate dikinase (PPDK) by catalyzing its phosphorylation/dephosphorylation. The sequence is that of Putative pyruvate, phosphate dikinase regulatory protein from Rhodospirillum rubrum (strain ATCC 11170 / ATH 1.1.1 / DSM 467 / LMG 4362 / NCIMB 8255 / S1).